Here is a 337-residue protein sequence, read N- to C-terminus: Holliday junction branch migration complex subunit RuvB (337 aa).

Residues 1 to 22 (MEDERITSAEVQSPDEENEELS) form a disordered region. A large ATPase domain (RuvB-L) region spans residues 1-184 (MEDERITSAE…FGIVEHMNYY (184 aa)). ATP-binding positions include leucine 23, arginine 24, glycine 65, lysine 68, threonine 69, threonine 70, 131–133 (EDF), arginine 174, tyrosine 184, and arginine 221. Residue threonine 69 participates in Mg(2+) binding. A small ATPAse domain (RuvB-S) region spans residues 185–255 (NEADLANIVR…LVSQSLKLLQ (71 aa)). A head domain (RuvB-H) region spans residues 258–337 (NRGLDRTDKK…LGLIDQYMNK (80 aa)). DNA-binding residues include arginine 313 and arginine 318.

Belongs to the RuvB family. As to quaternary structure, homohexamer. Forms an RuvA(8)-RuvB(12)-Holliday junction (HJ) complex. HJ DNA is sandwiched between 2 RuvA tetramers; dsDNA enters through RuvA and exits via RuvB. An RuvB hexamer assembles on each DNA strand where it exits the tetramer. Each RuvB hexamer is contacted by two RuvA subunits (via domain III) on 2 adjacent RuvB subunits; this complex drives branch migration. In the full resolvosome a probable DNA-RuvA(4)-RuvB(12)-RuvC(2) complex forms which resolves the HJ.

Its subcellular location is the cytoplasm. The catalysed reaction is ATP + H2O = ADP + phosphate + H(+). Its function is as follows. The RuvA-RuvB-RuvC complex processes Holliday junction (HJ) DNA during genetic recombination and DNA repair, while the RuvA-RuvB complex plays an important role in the rescue of blocked DNA replication forks via replication fork reversal (RFR). RuvA specifically binds to HJ cruciform DNA, conferring on it an open structure. The RuvB hexamer acts as an ATP-dependent pump, pulling dsDNA into and through the RuvAB complex. RuvB forms 2 homohexamers on either side of HJ DNA bound by 1 or 2 RuvA tetramers; 4 subunits per hexamer contact DNA at a time. Coordinated motions by a converter formed by DNA-disengaged RuvB subunits stimulates ATP hydrolysis and nucleotide exchange. Immobilization of the converter enables RuvB to convert the ATP-contained energy into a lever motion, pulling 2 nucleotides of DNA out of the RuvA tetramer per ATP hydrolyzed, thus driving DNA branch migration. The RuvB motors rotate together with the DNA substrate, which together with the progressing nucleotide cycle form the mechanistic basis for DNA recombination by continuous HJ branch migration. Branch migration allows RuvC to scan DNA until it finds its consensus sequence, where it cleaves and resolves cruciform DNA. This Pediococcus pentosaceus (strain ATCC 25745 / CCUG 21536 / LMG 10740 / 183-1w) protein is Holliday junction branch migration complex subunit RuvB.